Here is a 318-residue protein sequence, read N- to C-terminus: MNGDHMVLGSSVTDKKAIILVTILLLLRLVAIAGNGFITAALGVEWVLRRMLLPCDKLLVSLGASRFCLQSVVMGKTIYVFLHPMAFPYNPVLQFLAFQWDFLNAATLWSSTWLSVFYCVKIATFTHPVFFWLKHKLSGWLPWMLFSSVGLSSFTTILFFIGNHRMYQNYLRNHLQPWNVTGDSIRSYCEKFYLFPLKMITWTMPTAVFFICMILLITSLGRHRKKALLTTSGFREPSVQAHIKALLALLSFAMLFISYFLSLVFSAAGIFPPLDFKFWVWESVIYLCAAVHPIILLFSNCRLRAVLKSRRSSRCGTP.

Topologically, residues 1–7 (MNGDHMV) are extracellular. Residues 8–28 (LGSSVTDKKAIILVTILLLLR) traverse the membrane as a helical segment. The Cytoplasmic segment spans residues 29-40 (LVAIAGNGFITA). Residues 41 to 61 (ALGVEWVLRRMLLPCDKLLVS) form a helical membrane-spanning segment. Residues 62–88 (LGASRFCLQSVVMGKTIYVFLHPMAFP) lie on the Extracellular side of the membrane. A helical membrane pass occupies residues 89–109 (YNPVLQFLAFQWDFLNAATLW). Topologically, residues 110-128 (SSTWLSVFYCVKIATFTHP) are cytoplasmic. The helical transmembrane segment at 129-149 (VFFWLKHKLSGWLPWMLFSSV) threads the bilayer. The Extracellular portion of the chain corresponds to 150–183 (GLSSFTTILFFIGNHRMYQNYLRNHLQPWNVTGD). A glycan (N-linked (GlcNAc...) asparagine) is linked at N179. Residues 184 to 204 (SIRSYCEKFYLFPLKMITWTM) form a helical membrane-spanning segment. At 205-234 (PTAVFFICMILLITSLGRHRKKALLTTSGF) the chain is on the cytoplasmic side. Residues 235-255 (REPSVQAHIKALLALLSFAML) traverse the membrane as a helical segment. Topologically, residues 256–264 (FISYFLSLV) are extracellular. Residues 265 to 285 (FSAAGIFPPLDFKFWVWESVI) form a helical membrane-spanning segment. Residues 286–318 (YLCAAVHPIILLFSNCRLRAVLKSRRSSRCGTP) are Cytoplasmic-facing.

It belongs to the G-protein coupled receptor T2R family. As to expression, expressed in subsets of taste receptor cells of the tongue and exclusively in gustducin-positive cells.

It localises to the membrane. Receptor that may play a role in the perception of bitterness and is gustducin-linked. May play a role in sensing the chemical composition of the gastrointestinal content. The activity of this receptor may stimulate alpha gustducin, mediate PLC-beta-2 activation and lead to the gating of TRPM5. This chain is Taste receptor type 2 member 60 (TAS2R60), found in Homo sapiens (Human).